The sequence spans 365 residues: 3-dehydroquinate synthase (365 aa).

NAD(+)-binding positions include 95–99, 119–120, Lys132, and Lys141; these read GVVGD and TT. 3 residues coordinate Zn(2+): Glu174, His238, and His255.

Belongs to the sugar phosphate cyclases superfamily. Dehydroquinate synthase family. Co(2+) serves as cofactor. Zn(2+) is required as a cofactor. The cofactor is NAD(+).

Its subcellular location is the cytoplasm. It catalyses the reaction 7-phospho-2-dehydro-3-deoxy-D-arabino-heptonate = 3-dehydroquinate + phosphate. The protein operates within metabolic intermediate biosynthesis; chorismate biosynthesis; chorismate from D-erythrose 4-phosphate and phosphoenolpyruvate: step 2/7. Its function is as follows. Catalyzes the conversion of 3-deoxy-D-arabino-heptulosonate 7-phosphate (DAHP) to dehydroquinate (DHQ). This Chlorobium chlorochromatii (strain CaD3) protein is 3-dehydroquinate synthase.